Consider the following 277-residue polypeptide: Methyltransferase adrK (277 aa).

S-adenosyl-L-methionine-binding positions include Asp-123–Leu-124, Asp-150–Val-151, and Val-151–Leu-152.

Belongs to the class I-like SAM-binding methyltransferase superfamily. As to quaternary structure, homodimer.

It participates in secondary metabolite biosynthesis; terpenoid biosynthesis. In terms of biological role, methyltransferase; part of the gene cluster that mediates the biosynthesis of andrastins, meroterpenoid compounds that exhibit inhibitory activity against ras farnesyltransferase, suggesting that they could be promising leads for antitumor agents. The first step of the pathway is the synthesis of 3,5-dimethylorsellinic acid (DMOA) by the polyketide synthase adrD via condensation of one acetyl-CoA starter unit with 3 malonyl-CoA units and 2 methylations. DMAO is then converted to farnesyl-DMAO by the prenyltransferase adrG. The methyltransferase adrK catalyzes the methylation of the carboxyl group of farnesyl-DMAO to farnesyl-DMAO methyl ester which is further converted to epoxyfarnesyl-DMAO methyl ester by the FAD-dependent monooxygenase adrH. The terpene cyclase adrI then catalyzes the carbon skeletal rearrangement to generate the andrastin E, the first compound in the pathway having the andrastin scaffold, with the tetracyclic ring system. The post-cyclization tailoring enzymes adrF, adrE, adrJ, and adrA, are involved in the conversion of andrastin E into andrastin A. The short chain dehydrogenase adrF is responsible for the oxidation of the C-3 a hydroxyl group of andrastin E to yield the corresponding ketone, andrastin D. The ketoreductase adrE stereoselectively reduces the carbonyl moiety to reverse the stereochemistry of the C-3 position to yield andrastin F. The acetyltransferase adrJ is the acetyltransferase that attaches the acetyl group to the C-3 hydroxyl group of andrastin F to yield andrastin C. Finally, the cytochrome P450 monooxygenase adrA catalyzes two sequential oxidation reactions of the C-23 methyl group, to generate the corresponding alcohol andrastin B, and aldehyde andrastin A. The chain is Methyltransferase adrK from Penicillium rubens (strain ATCC 28089 / DSM 1075 / NRRL 1951 / Wisconsin 54-1255) (Penicillium chrysogenum).